Consider the following 545-residue polypeptide: Solute carrier family 22 member 6 (545 aa).

Residues 1–9 (MAFNDLLKQ) are Cytoplasmic-facing. A helical transmembrane segment spans residues 10–30 (VGGVGRFQLIQVTMVVAPLLL). Topologically, residues 31-129 (MASHNTLQNF…LVCSHRAFRQ (99 aa)) are extracellular. Asn-39, Asn-56, Asn-86, Asn-91, and Asn-107 each carry an N-linked (GlcNAc...) asparagine glycan. Residues 130 to 150 (LAQSLFMVGVLLGAMMFGYLA) traverse the membrane as a helical segment. At 151–157 (DRLGRRK) the chain is on the cytoplasmic side. The helical transmembrane segment at 158–177 (VLILNYLQTAVSGTCAAYAP) threads the bilayer. A glycan (N-linked (GlcNAc...) asparagine) is linked at Asn-178. Residues 178 to 180 (NYT) are Extracellular-facing. The chain crosses the membrane as a helical span at residues 181-201 (VYCIFRLLSGMSLASIAINCM). The Cytoplasmic segment spans residues 202–218 (TLNMEWMPIHTRAYVGT). A helical transmembrane segment spans residues 219 to 239 (LIGYVYSLGQFLLAGIAYAVP). At 240 to 242 (HWR) the chain is on the extracellular side. Residues 243–263 (HLQLAVSVPFFVAFIYSWFFI) traverse the membrane as a helical segment. Topologically, residues 264–331 (ESARWYSSSG…ELLRCPTLRR (68 aa)) are cytoplasmic. Residues 332-352 (LFLCLSMLWFATSFAYYGLVM) form a helical membrane-spanning segment. Residues 353 to 362 (DLQGFGVSMY) lie on the Extracellular side of the membrane. The chain crosses the membrane as a helical span at residues 363-383 (LIQVIFGAVDLPAKFVCFLVI). Topologically, residues 384–389 (NSMGRR) are cytoplasmic. A helical transmembrane segment spans residues 390 to 410 (PAQLASLLLAGICILVNGIIP). Residues 411–419 (RGHTIIRTS) lie on the Extracellular side of the membrane. The chain crosses the membrane as a helical span at residues 420–440 (LAVLGKGCLASSFNCIFLYTG). Residues 441-450 (ELYPTMIRQT) lie on the Cytoplasmic side of the membrane. Residues 451-471 (GLGMGSTMARVGSIVSPLISM) form a helical membrane-spanning segment. Residues 472–478 (TAEFYPS) are Extracellular-facing. A helical membrane pass occupies residues 479–499 (IPLFIFGAVPVAASAVTALLP). The Cytoplasmic portion of the chain corresponds to 500–545 (ETLGQPLPDTVQDLKSRSRGKQKQQQLEQQKQMIPLQVSTQEKNGL). The segment at 515 to 545 (SRSRGKQKQQQLEQQKQMIPLQVSTQEKNGL) is disordered. A compositionally biased stretch (low complexity) spans 522 to 531 (KQQQLEQQKQ). Polar residues predominate over residues 536–545 (QVSTQEKNGL).

Belongs to the major facilitator (TC 2.A.1) superfamily. Organic cation transporter (TC 2.A.1.19) family. Post-translationally, glycosylated. Glycosylation is necessary for proper targeting of the transporter to the plasma membrane. As to expression, expressed in kidney. In kidney, restricted to the proximal convoluted tubule (representing S1 and S2 segments). In brain, expressed in neurons of the cortex cerebri and hippocampus as well as in the ependymal cell layer of the choroid plexus.

It localises to the basolateral cell membrane. Its subcellular location is the basal cell membrane. It catalyses the reaction (6R)-L-erythro-5,6,7,8-tetrahydrobiopterin(out) + a dicarboxylate(in) = (6R)-L-erythro-5,6,7,8-tetrahydrobiopterin(in) + a dicarboxylate(out). The catalysed reaction is L-erythro-7,8-dihydrobiopterin(out) + a dicarboxylate(in) = L-erythro-7,8-dihydrobiopterin(in) + a dicarboxylate(out). The enzyme catalyses L-sepiapterin(out) + a dicarboxylate(in) = L-sepiapterin(in) + a dicarboxylate(out). It carries out the reaction prostaglandin F2alpha(out) + a dicarboxylate(in) = prostaglandin F2alpha(in) + a dicarboxylate(out). It catalyses the reaction prostaglandin E2(out) + a dicarboxylate(in) = prostaglandin E2(in) + a dicarboxylate(out). The catalysed reaction is 3',5'-cyclic AMP(out) + a dicarboxylate(in) = 3',5'-cyclic AMP(in) + a dicarboxylate(out). The enzyme catalyses 3',5'-cyclic GMP(out) + a dicarboxylate(in) = 3',5'-cyclic GMP(in) + a dicarboxylate(out). It carries out the reaction urate(out) + a dicarboxylate(in) = urate(in) + a dicarboxylate(out). It catalyses the reaction kynurenate(out) + glutarate(in) = kynurenate(in) + glutarate(out). The catalysed reaction is (indol-3-yl)acetate(out) + a dicarboxylate(in) = (indol-3-yl)acetate(in) + a dicarboxylate(out). The enzyme catalyses indoxyl sulfate(out) + a dicarboxylate(in) = indoxyl sulfate(in) + a dicarboxylate(out). It carries out the reaction N-benzoylglycine(out) + a dicarboxylate(in) = N-benzoylglycine(in) + a dicarboxylate(out). It catalyses the reaction 3-carboxy-4-methyl-5-propyl-2-furanpropanoate(out) + a dicarboxylate(in) = 3-carboxy-4-methyl-5-propyl-2-furanpropanoate(in) + a dicarboxylate(out). Secondary active transporter that functions as a Na(+)-independent organic anion (OA)/dicarboxylate antiporter where the uptake of one molecule of OA into the cell is coupled with an efflux of one molecule of intracellular dicarboxylate such as 2-oxoglutarate or glutarate. Mediates the uptake of OA across the basolateral side of proximal tubule epithelial cells, thereby contributing to the renal elimination of endogenous OA from the systemic circulation into the urine. Functions as a biopterin transporters involved in the uptake and the secretion of coenzymes tetrahydrobiopterin (BH4), dihydrobiopterin (BH2) and sepiapterin to urine, thereby determining baseline levels of blood biopterins. Transports prostaglandin E2 (PGE2) and prostaglandin F2-alpha (PGF2-alpha) and may contribute to their renal excretion. Involved in the transport of neuroactive tryptophan metabolites kynurenate (KYNA) and xanthurenate (XA). May transport glutamate. Also involved in the disposition of uremic toxins and potentially toxic xenobiotics by the renal organic anion secretory pathway, helping reduce their undesired toxicological effects on the body. Uremic toxins include the indoxyl sulfate (IS), hippurate/N-benzoylglycine (HA), indole acetate (IA) and 3-carboxy-4- methyl-5-propyl-2-furanpropionate(CMPF) and urate. Xenobiotics include the mycotoxin ochratoxin (OTA). May also contribute to the transport of organic compounds in testes across the blood-testis-barrier. This Mus musculus (Mouse) protein is Solute carrier family 22 member 6.